The primary structure comprises 270 residues: UPF0246 protein Psyc_0554 (270 aa).

It belongs to the UPF0246 family.

The polypeptide is UPF0246 protein Psyc_0554 (Psychrobacter arcticus (strain DSM 17307 / VKM B-2377 / 273-4)).